Consider the following 219-residue polypeptide: Small ribosomal subunit protein uS3c (219 aa).

The KH type-2 domain occupies 39 to 111 (IRKFLMEKIK…NSFFNVKINF (73 aa)).

This sequence belongs to the universal ribosomal protein uS3 family. Part of the 30S ribosomal subunit.

The protein resides in the plastid. The polypeptide is Small ribosomal subunit protein uS3c (rps3) (Euglena longa (Euglenophycean alga)).